The following is a 432-amino-acid chain: T-box transcription factor T (432 aa).

The segment at residues L49–D217 is a DNA-binding region (T-box). The segment at C274–S306 is disordered. The span at T293–S306 shows a compositional bias: polar residues.

In terms of assembly, when not bound to DNA, exists as a monomer. Binds DNA as a dimer. In terms of tissue distribution, expressed in presumptive mesodermal cells around the blastopore, and then in the notochord.

The protein localises to the nucleus. In terms of biological role, involved in the transcriptional regulation of genes required for mesoderm formation and differentiation. Binds to the palindromic T site 5'-TTCACACCTAGGTGTGAA-3' DNA sequence. Causes dorsal mesodermal differentiation of animal cap ectoderm when co-expressed with wnt8 and noggin. None of these molecules causes dorsal mesoderm formation when expressed alone. Establishes the left/right axis at early gastrula stage by directly up-regulating mesodermal expression of zic3. This is T-box transcription factor T from Xenopus laevis (African clawed frog).